We begin with the raw amino-acid sequence, 375 residues long: Histidine biosynthesis bifunctional protein HisB (375 aa).

The segment at 1-168 (MTPIVFIDRD…GIAHTLADAP (168 aa)) is histidinol-phosphatase. Asp8 (nucleophile) is an active-site residue. Positions 8, 10, and 128 each coordinate Mg(2+). The Proton donor role is filled by Asp10. The interval 169-375 (RRAVVQRHTK…HVLPSTKGAL (207 aa)) is imidazoleglycerol-phosphate dehydratase.

In the N-terminal section; belongs to the histidinol-phosphatase family. It in the C-terminal section; belongs to the imidazoleglycerol-phosphate dehydratase family. Mg(2+) is required as a cofactor.

The protein localises to the cytoplasm. The catalysed reaction is D-erythro-1-(imidazol-4-yl)glycerol 3-phosphate = 3-(imidazol-4-yl)-2-oxopropyl phosphate + H2O. The enzyme catalyses L-histidinol phosphate + H2O = L-histidinol + phosphate. It participates in amino-acid biosynthesis; L-histidine biosynthesis; L-histidine from 5-phospho-alpha-D-ribose 1-diphosphate: step 6/9. Its pathway is amino-acid biosynthesis; L-histidine biosynthesis; L-histidine from 5-phospho-alpha-D-ribose 1-diphosphate: step 8/9. This is Histidine biosynthesis bifunctional protein HisB from Xylella fastidiosa (strain Temecula1 / ATCC 700964).